Here is a 262-residue protein sequence, read N- to C-terminus: Small ribosomal subunit protein eS1 (262 aa).

The protein belongs to the eukaryotic ribosomal protein eS1 family. In terms of assembly, component of the small ribosomal subunit. Mature ribosomes consist of a small (40S) and a large (60S) subunit. The 40S subunit contains about 33 different proteins and 1 molecule of RNA (18S). The 60S subunit contains about 49 different proteins and 3 molecules of RNA (25S, 5.8S and 5S).

It localises to the cytoplasm. The sequence is that of Small ribosomal subunit protein eS1 from Plasmodium knowlesi (strain H).